We begin with the raw amino-acid sequence, 104 residues long: Flagellar hook-basal body complex protein FliE (104 aa).

The protein belongs to the FliE family.

Its subcellular location is the bacterial flagellum basal body. The protein is Flagellar hook-basal body complex protein FliE of Pectobacterium carotovorum subsp. carotovorum (strain PC1).